The sequence spans 215 residues: Cytochrome b6 (215 aa).

A helical membrane pass occupies residues 32–52 (IFYCLGGITFTCFLVQVATGF). Cysteine 35 is a heme c binding site. 2 residues coordinate heme b: histidine 86 and histidine 100. The next 3 membrane-spanning stretches (helical) occupy residues 90–110 (ASMM…TGGF), 116–136 (LTWT…VTGY), and 186–206 (LHTF…FLMI). Residues histidine 187 and histidine 202 each contribute to the heme b site.

Belongs to the cytochrome b family. PetB subfamily. As to quaternary structure, the 4 large subunits of the cytochrome b6-f complex are cytochrome b6, subunit IV (17 kDa polypeptide, PetD), cytochrome f and the Rieske protein, while the 4 small subunits are PetG, PetL, PetM and PetN. The complex functions as a dimer. It depends on heme b as a cofactor. The cofactor is heme c.

It is found in the plastid. Its subcellular location is the chloroplast thylakoid membrane. Component of the cytochrome b6-f complex, which mediates electron transfer between photosystem II (PSII) and photosystem I (PSI), cyclic electron flow around PSI, and state transitions. The chain is Cytochrome b6 from Stigeoclonium helveticum (Green alga).